Consider the following 95-residue polypeptide: Small ubiquitin-related modifier 2 (95 aa).

M1 is covalently cross-linked (Peptide (Met-Gly) (interchain with G-Cter in ubiquitin)). Glycyl lysine isopeptide (Lys-Gly) (interchain with G-Cter in SUMO2) cross-links involve residues K5 and K7. K11 carries the N6-acetyllysine; alternate modification. K11 participates in a covalent cross-link: Glycyl lysine isopeptide (Lys-Gly) (interchain with G-Cter in SUMO); alternate. Residue K11 forms a Glycyl lysine isopeptide (Lys-Gly) (interchain with G-Cter in SUMO1); alternate linkage. A Glycyl lysine isopeptide (Lys-Gly) (interchain with G-Cter in SUMO2); alternate cross-link involves residue K11. Residue K11 forms a Glycyl lysine isopeptide (Lys-Gly) (interchain with G-Cter in ubiquitin); alternate linkage. Positions 16 to 95 constitute a Ubiquitin-like domain; that stretch reads DHINLKVAGQ…VFQQQTGGVY (80 aa). Residue K21 forms a Glycyl lysine isopeptide (Lys-Gly) (interchain with G-Cter in SUMO2) linkage. Residue G93 forms a Glycyl lysine isopeptide (Gly-Lys) (interchain with K-? in acceptor proteins) linkage. A propeptide spanning residues 94–95 is cleaved from the precursor; it reads VY.

This sequence belongs to the ubiquitin family. SUMO subfamily. Interacts with SAE2 and UBE2I. Interacts with ZNF451. Identified in a complex with ZNF451 and UBE2I/UBC9, where one ZNF451 interacts with one UBE2I/UBC9 and two SUMO2 chains, one bound to the UBE2I/UBC9 active site and the other to another region of the same UBE2I/UBC9 molecule. Covalently attached to a number of proteins. Interacts with PELP1. Interacts with USP25; the interaction sumoylates USP25. Interacts with SIMC1, CASP8AP2, RNF111 and SOBP (via SIM domains). Interacts with MTA1. Interacts with HINT1. Interacts with GCNA (via SIM domains); this interaction allows the GCNA recruitment to DPCs sites. In terms of processing, polymeric chains can be formed through Lys-11 cross-linking. Polymeric SUMO2 chains undergo 'Lys-6'-, 'Lys-11'-, 'Lys-48'- and 'Lys-63'-linked polyubiquitination by RNF4. Cleavage of precursor form by SENP1 or SENP2 is necessary for function. Post-translationally, monoubiquitinated N-terminally by UBE2W, which primes it for RNF4-dependent polyubiquitination by the UBE2V1-UBE2N heterodimer.

The protein localises to the nucleus. It is found in the PML body. Functionally, ubiquitin-like protein that can be covalently attached to proteins as a monomer or as a lysine-linked polymer. Covalent attachment via an isopeptide bond to its substrates requires prior activation by the E1 complex SAE1-SAE2 and linkage to the E2 enzyme UBE2I, and can be promoted by an E3 ligase such as PIAS1-4, RANBP2 or CBX4. This post-translational modification on lysine residues of proteins plays a crucial role in a number of cellular processes such as nuclear transport, DNA replication and repair, mitosis and signal transduction. Polymeric SUMO2 chains are also susceptible to polyubiquitination which functions as a signal for proteasomal degradation of modified proteins. Plays a role in the regulation of sumoylation status of SETX. The protein is Small ubiquitin-related modifier 2 of Bos taurus (Bovine).